Reading from the N-terminus, the 154-residue chain is uncharacterized protein (154 aa).

Functionally, this protein may be involved in virus assembly. Essential for virus function. This is an uncharacterized protein from Saccharolobus solfataricus (Sulfolobus solfataricus).